The following is a 271-amino-acid chain: NADPH-dependent 7-cyano-7-deazaguanine reductase (271 aa).

81–83 (IES) contacts substrate. An NADPH-binding site is contributed by 83–84 (SK). Cys177 acts as the Thioimide intermediate in catalysis. Asp184 functions as the Proton donor in the catalytic mechanism. 216–217 (HE) contacts substrate. 245–246 (RG) contacts NADPH.

Belongs to the GTP cyclohydrolase I family. QueF type 2 subfamily. Homodimer.

It is found in the cytoplasm. It catalyses the reaction 7-aminomethyl-7-carbaguanine + 2 NADP(+) = 7-cyano-7-deazaguanine + 2 NADPH + 3 H(+). Its pathway is tRNA modification; tRNA-queuosine biosynthesis. Its function is as follows. Catalyzes the NADPH-dependent reduction of 7-cyano-7-deazaguanine (preQ0) to 7-aminomethyl-7-deazaguanine (preQ1). This Xanthomonas axonopodis pv. citri (strain 306) protein is NADPH-dependent 7-cyano-7-deazaguanine reductase.